Here is a 535-residue protein sequence, read N- to C-terminus: Genetic interactor of prohibitins 3, mitochondrial (535 aa).

A mitochondrion-targeting transit peptide spans 1–38 (MLPVSRLCVRSSLRKLVFVRFVSCTSCGVTLQNNNVRG). The region spanning 111-283 (MQEVYRHVPA…INDLPGYSTN (173 aa)) is the CP-type G domain.

Belongs to the TRAFAC class YlqF/YawG GTPase family. GEP3 subfamily.

The protein localises to the mitochondrion. In terms of biological role, may be involved in the mitochondrial lipid metabolism. This is Genetic interactor of prohibitins 3, mitochondrial (GEP3) from Lachancea thermotolerans (strain ATCC 56472 / CBS 6340 / NRRL Y-8284) (Yeast).